The chain runs to 884 residues: Chitin synthase E (884 aa).

2 disordered regions span residues 1–58 (MGTP…PAVS) and 73–108 (AVFAAPPYQESEAASENTFRARSNGDKASREGSRAG). 2 stretches are compositionally biased toward polar residues: residues 37–48 (QSLLERNNSSHY) and 84–93 (EAASENTFRA). A glycan (N-linked (GlcNAc...) asparagine) is linked at Asn44. Over residues 95 to 105 (SNGDKASREGS) the composition is skewed to basic and acidic residues. The N-linked (GlcNAc...) asparagine glycan is linked to Asn301. 7 helical membrane-spanning segments follow: residues 513–532 (WLNGSFAAGLYAIMHFGRIY), 556–576 (IMTWFSLASYWLTSSVIMDLV), 597–617 (IVNNFVKYGYVWVLTLQFIMA), 635–655 (YFSLVQLYVLILSFYLVVGAF), 681–701 (GGIVLIALVSTYGIYIIASVL), 708–728 (IITSSWAYFLGMTTSINILMV), and 812–832 (VLVCLWVFSNLLVTLLITATG). Asn840 carries N-linked (GlcNAc...) asparagine glycosylation. The helical transmembrane segment at 852-872 (VILWITAGLSLFRFIGSLWFL) threads the bilayer.

This sequence belongs to the chitin synthase family. Class III subfamily.

Its subcellular location is the cell membrane. The enzyme catalyses [(1-&gt;4)-N-acetyl-beta-D-glucosaminyl](n) + UDP-N-acetyl-alpha-D-glucosamine = [(1-&gt;4)-N-acetyl-beta-D-glucosaminyl](n+1) + UDP + H(+). In terms of biological role, polymerizes chitin, a structural polymer of the cell wall and septum, by transferring the sugar moiety of UDP-GlcNAc to the non-reducing end of the growing chitin polymer. Plays an important role in septal growth or maintenance. Mediates colony spore formation. ChsE and chsD seem to play a functionally redundant role in lateral cell wall chitin synthesis. Involved in resistance to echinocandins. The sequence is that of Chitin synthase E from Aspergillus niger (strain ATCC MYA-4892 / CBS 513.88 / FGSC A1513).